The sequence spans 381 residues: Cobalt-precorrin-5B C(1)-methyltransferase (381 aa).

The protein belongs to the CbiD family.

It catalyses the reaction Co-precorrin-5B + S-adenosyl-L-methionine = Co-precorrin-6A + S-adenosyl-L-homocysteine. Its pathway is cofactor biosynthesis; adenosylcobalamin biosynthesis; cob(II)yrinate a,c-diamide from sirohydrochlorin (anaerobic route): step 6/10. Functionally, catalyzes the methylation of C-1 in cobalt-precorrin-5B to form cobalt-precorrin-6A. In Clostridium botulinum (strain Eklund 17B / Type B), this protein is Cobalt-precorrin-5B C(1)-methyltransferase.